The following is a 316-amino-acid chain: Protoheme IX farnesyltransferase (316 aa).

The next 9 membrane-spanning stretches (helical) occupy residues 32–52, 53–73, 93–113, 116–136, 152–172, 180–200, 221–241, 252–271, and 289–309; these read VMSL…GHIN, PVLG…SGAL, IPAG…LSGF, VILG…TIFF, NIVI…ACVT, TVLF…LALF, VTKH…VLPS, LVAA…VWRM, and IFYL…AILV.

This sequence belongs to the UbiA prenyltransferase family. Protoheme IX farnesyltransferase subfamily.

It is found in the cell inner membrane. The enzyme catalyses heme b + (2E,6E)-farnesyl diphosphate + H2O = Fe(II)-heme o + diphosphate. It participates in porphyrin-containing compound metabolism; heme O biosynthesis; heme O from protoheme: step 1/1. Converts heme B (protoheme IX) to heme O by substitution of the vinyl group on carbon 2 of heme B porphyrin ring with a hydroxyethyl farnesyl side group. The sequence is that of Protoheme IX farnesyltransferase from Rhizobium etli (strain ATCC 51251 / DSM 11541 / JCM 21823 / NBRC 15573 / CFN 42).